Consider the following 260-residue polypeptide: uncharacterized protein (260 aa).

A signal peptide spans 1–22; it reads MGNIKSFALYISILLLIVVVAG. Residue cysteine 23 is the site of N-palmitoyl cysteine attachment. Cysteine 23 is lipidated: S-diacylglycerol cysteine.

The protein belongs to the staphylococcal tandem lipoprotein family.

It is found in the cell membrane. This is an uncharacterized protein from Staphylococcus aureus (strain MRSA252).